The primary structure comprises 931 residues: Protein translocase subunit SecA (931 aa).

ATP-binding positions include glutamine 87, 105 to 109 (GEGKT), and aspartate 523. The Zn(2+) site is built by cysteine 915, cysteine 917, cysteine 926, and histidine 927.

This sequence belongs to the SecA family. Monomer and homodimer. Part of the essential Sec protein translocation apparatus which comprises SecA, SecYEG and auxiliary proteins SecDF-YajC and YidC. It depends on Zn(2+) as a cofactor.

It localises to the cell inner membrane. It is found in the cytoplasm. It carries out the reaction ATP + H2O + cellular proteinSide 1 = ADP + phosphate + cellular proteinSide 2.. In terms of biological role, part of the Sec protein translocase complex. Interacts with the SecYEG preprotein conducting channel. Has a central role in coupling the hydrolysis of ATP to the transfer of proteins into and across the cell membrane, serving both as a receptor for the preprotein-SecB complex and as an ATP-driven molecular motor driving the stepwise translocation of polypeptide chains across the membrane. This chain is Protein translocase subunit SecA, found in Xanthobacter autotrophicus (strain ATCC BAA-1158 / Py2).